The chain runs to 268 residues: MAFSISKKAAVAALFSFLVVTCVAGARPGNFSASDFTADPNWEVARATWYGAPTGAGPDDDGGACGFKNTNQYPFSSMTSCGNEPIFKDGKGCGSCYQIRCVNHPACSGNPETVIITDMNYYPVSKYHFDLSGTAFGAMAKPGQNDQLRHAGIIDIQFKRVPCNFPGLKVTFHVEEGSNPVYFAVLVEYEDGDGDVVQVDLMEANSQSWTPMRESWGSIWRLDSNHRLTAPFSLRITNESGKQLVASQVIPANWAPMAVYRSFVQYSS.

A signal peptide spans 1 to 25 (MAFSISKKAAVAALFSFLVVTCVAG). Asn30 carries N-linked (GlcNAc...) asparagine glycosylation. One can recognise an Expansin-like EG45 domain in the interval 62–168 (GGACGFKNTN…KRVPCNFPGL (107 aa)). Disulfide bonds link Cys65-Cys93, Cys96-Cys163, and Cys101-Cys107. Residues 181 to 262 (VYFAVLVEYE…NWAPMAVYRS (82 aa)) form the Expansin-like CBD domain. N-linked (GlcNAc...) asparagine glycosylation is present at Asn238.

Belongs to the expansin family. Expansin B subfamily. In terms of tissue distribution, expressed in roots, coleoptiles and internodes.

The protein resides in the secreted. Its subcellular location is the cell wall. The protein localises to the membrane. Functionally, may cause loosening and extension of plant cell walls by disrupting non-covalent bonding between cellulose microfibrils and matrix glucans. No enzymatic activity has been found. May be required for rapid internodal elongation in deepwater rice during submergence. This chain is Expansin-B3 (EXPB3), found in Oryza sativa subsp. japonica (Rice).